The primary structure comprises 1159 residues: ATP-dependent helicase/deoxyribonuclease subunit B (1159 aa).

8–15 lines the ATP pocket; the sequence is GRAGSGKT. [4Fe-4S] cluster contacts are provided by Cys784, Cys1102, Cys1105, and Cys1111. Positions 1140–1159 are disordered; the sequence is VKEDGSQVDGRTEGSDNNEG.

Belongs to the helicase family. AddB/RexB type 1 subfamily. As to quaternary structure, heterodimer of AddA and AddB. The cofactor is Mg(2+). [4Fe-4S] cluster is required as a cofactor.

In terms of biological role, the heterodimer acts as both an ATP-dependent DNA helicase and an ATP-dependent, dual-direction single-stranded exonuclease. Recognizes the chi site generating a DNA molecule suitable for the initiation of homologous recombination. The AddB subunit has 5' -&gt; 3' nuclease activity but not helicase activity. The sequence is that of ATP-dependent helicase/deoxyribonuclease subunit B from Caldanaerobacter subterraneus subsp. tengcongensis (strain DSM 15242 / JCM 11007 / NBRC 100824 / MB4) (Thermoanaerobacter tengcongensis).